The following is a 696-amino-acid chain: Polyribonucleotide nucleotidyltransferase (696 aa).

Residues Asp-486 and Asp-492 each coordinate Mg(2+). A KH domain is found at 553–612 (PRIIVRNIPKDRIGELIGPGGKNVRGISELTGAELYIEDDGRVTISGSNQESAEKAAKMV). In terms of domain architecture, S1 motif spans 622-690 (GKIYEGKVKR…KTGKIDLSRK (69 aa)).

It belongs to the polyribonucleotide nucleotidyltransferase family. It depends on Mg(2+) as a cofactor.

It is found in the cytoplasm. The enzyme catalyses RNA(n+1) + phosphate = RNA(n) + a ribonucleoside 5'-diphosphate. In terms of biological role, involved in mRNA degradation. Catalyzes the phosphorolysis of single-stranded polyribonucleotides processively in the 3'- to 5'-direction. The protein is Polyribonucleotide nucleotidyltransferase of Leptospira borgpetersenii serovar Hardjo-bovis (strain JB197).